A 464-amino-acid chain; its full sequence is Phospho-2-dehydro-3-deoxyheptonate aldolase AroG (464 aa).

Cys-87 contacts Mn(2+). Residues Arg-126, 285-286 (ER), Lys-308, and Arg-339 each bind phosphoenolpyruvate. Positions 371, 413, and 443 each coordinate Mn(2+).

The protein belongs to the class-II DAHP synthase family. Homodimer. Probably interacts with MSMEG_5536. Mn(2+) serves as cofactor. The cofactor is Co(2+). Requires Cd(2+) as cofactor.

The catalysed reaction is D-erythrose 4-phosphate + phosphoenolpyruvate + H2O = 7-phospho-2-dehydro-3-deoxy-D-arabino-heptonate + phosphate. Its pathway is metabolic intermediate biosynthesis; chorismate biosynthesis; chorismate from D-erythrose 4-phosphate and phosphoenolpyruvate: step 1/7. Functionally, catalyzes an aldol-like condensation reaction between phosphoenolpyruvate (PEP) and D-erythrose 4-phosphate (E4P) to generate 3-deoxy-D-arabino-heptulosonate 7-phosphate (DAH7P) and inorganic phosphate. The sequence is that of Phospho-2-dehydro-3-deoxyheptonate aldolase AroG (aroG) from Mycolicibacterium smegmatis (strain ATCC 700084 / mc(2)155) (Mycobacterium smegmatis).